Here is a 287-residue protein sequence, read N- to C-terminus: Thiazole synthase (287 aa).

K111 serves as the catalytic Schiff-base intermediate with DXP. Residues G172, 203–204 (AG), and 225–226 (NT) contribute to the 1-deoxy-D-xylulose 5-phosphate site. A disordered region spans residues 268-287 (PQEGVISTRPYGSQADEIGS).

The protein belongs to the ThiG family. As to quaternary structure, homotetramer. Forms heterodimers with either ThiH or ThiS.

The protein resides in the cytoplasm. It catalyses the reaction [ThiS sulfur-carrier protein]-C-terminal-Gly-aminoethanethioate + 2-iminoacetate + 1-deoxy-D-xylulose 5-phosphate = [ThiS sulfur-carrier protein]-C-terminal Gly-Gly + 2-[(2R,5Z)-2-carboxy-4-methylthiazol-5(2H)-ylidene]ethyl phosphate + 2 H2O + H(+). It functions in the pathway cofactor biosynthesis; thiamine diphosphate biosynthesis. Its function is as follows. Catalyzes the rearrangement of 1-deoxy-D-xylulose 5-phosphate (DXP) to produce the thiazole phosphate moiety of thiamine. Sulfur is provided by the thiocarboxylate moiety of the carrier protein ThiS. In vitro, sulfur can be provided by H(2)S. The sequence is that of Thiazole synthase from Rhodopirellula baltica (strain DSM 10527 / NCIMB 13988 / SH1).